Reading from the N-terminus, the 470-residue chain is mRNA export factor ICP27 homolog (470 aa).

2 disordered regions span residues 1–31 (MALS…TGGD) and 73–202 (FSAS…AGDR). The segment covering 73 to 85 (FSASPQRAQPSNP) has biased composition (polar residues). 2 stretches are compositionally biased toward basic residues: residues 94-107 (HGRR…RRNN) and 178-187 (RVHRNRRRGN). Zn(2+) contacts are provided by cysteine 359, histidine 437, cysteine 441, and cysteine 446. A CHC2-type zinc finger spans residues 359-446 (CYLSSSGSPT…HKRRCKADTC (88 aa)).

Belongs to the HHV-1 ICP27 protein family. Homodimer. Homodimerization is required for transactivation. Associates in a complex with RNA, and host export factors NXF1/TAP and ALYREF; these interactions allow nuclear export of viral transcripts. Interacts with three host shuttling SR proteins SRSF1, SRSF3 and SRSF7. Interacts with host SRPK1. Interacts with IE62; this interaction enhances IE62 transactivation.

It is found in the host cytoplasm. Its subcellular location is the host nucleus. In terms of biological role, multifunctional regulator of the expression of viral genes that mediates nuclear export of viral intronless mRNAs. This immediate early (EI) protein promotes the nuclear export of viral intronless mRNAs by interacting with mRNAs and host NXF1/TAP. The polypeptide is mRNA export factor ICP27 homolog (Equine herpesvirus 1 (strain Kentucky A) (EHV-1)).